The sequence spans 274 residues: Beta-lactamase OXA-9 (274 aa).

Positions 1 to 24 (MKKILLLHMLVFVSATLPISSVAS) are cleaved as a signal peptide. Residue Ser58 is the Acyl-ester intermediate of the active site. Residue Lys61 is modified to N6-carboxylysine. 206-208 (KSG) is a substrate binding site.

Belongs to the class-D beta-lactamase family.

It carries out the reaction a beta-lactam + H2O = a substituted beta-amino acid. Functionally, oxacillin-hydrolyzing beta-lactamase. Confers resistance to beta-lactam antibiotics but at a significantly lower level than the TEM bla gene product. The chain is Beta-lactamase OXA-9 (bla) from Klebsiella aerogenes (Enterobacter aerogenes).